The primary structure comprises 173 residues: uncharacterized protein (173 aa).

An N-terminal signal peptide occupies residues Met1–Gly20. Asn53 is a glycosylation site (N-linked (GlcNAc...) asparagine).

Component of the acid-insoluble organic matrix of calcified shell layers (at protein level).

The protein resides in the secreted. This is an uncharacterized protein from Haliotis asinina (Donkey's ear abalone).